The chain runs to 431 residues: Glutamyl-tRNA(Gln) amidotransferase subunit A (431 aa).

Active-site charge relay system residues include K55 and S130. Catalysis depends on S154, which acts as the Acyl-ester intermediate.

This sequence belongs to the amidase family. GatA subfamily. In terms of assembly, heterotrimer of A, B and C subunits.

The enzyme catalyses L-glutamyl-tRNA(Gln) + L-glutamine + ATP + H2O = L-glutaminyl-tRNA(Gln) + L-glutamate + ADP + phosphate + H(+). Allows the formation of correctly charged Gln-tRNA(Gln) through the transamidation of misacylated Glu-tRNA(Gln) in organisms which lack glutaminyl-tRNA synthetase. The reaction takes place in the presence of glutamine and ATP through an activated gamma-phospho-Glu-tRNA(Gln). This Methanococcus vannielii (strain ATCC 35089 / DSM 1224 / JCM 13029 / OCM 148 / SB) protein is Glutamyl-tRNA(Gln) amidotransferase subunit A.